The chain runs to 326 residues: Phosphatidylinositol:ceramide inositolphosphotransferase (326 aa).

Transmembrane regions (helical) follow at residues Leu-33 to Tyr-53, Ser-82 to His-102, Val-115 to Leu-135, Val-169 to Val-189, Arg-199 to Ser-219, and His-222 to Asp-242. His-181 is an active-site residue. Catalysis depends on residues His-222 and Asp-226. The tract at residues Met-306–Thr-326 is disordered. Over residues His-316–Thr-326 the composition is skewed to polar residues.

This sequence belongs to the sphingomyelin synthase family.

The protein resides in the golgi apparatus. It localises to the trans-Golgi network membrane. Its function is as follows. Catalyzes the transfer of the phosphorylinositol group from phosphatidylinositol (PI) to phytoceramide, an essential step in sphingolipid biosynthesis. May play an important role in modulating plant programmed cell death (PCD) associated with defense (e.g. toward Golovinomyces cichoracearum) by promoting sphingolipid metabolism and regulating ceramide accumulation. This is Phosphatidylinositol:ceramide inositolphosphotransferase (ERH1) from Oryza sativa subsp. indica (Rice).